Reading from the N-terminus, the 425-residue chain is Enolase (425 aa).

Position 163 (Q163) interacts with (2R)-2-phosphoglycerate. The active-site Proton donor is E205. Residues D242, E286, and D313 each contribute to the Mg(2+) site. The (2R)-2-phosphoglycerate site is built by K338, R367, S368, and K389. K338 serves as the catalytic Proton acceptor.

The protein belongs to the enolase family. It depends on Mg(2+) as a cofactor.

The protein localises to the cytoplasm. It localises to the secreted. The protein resides in the cell surface. The catalysed reaction is (2R)-2-phosphoglycerate = phosphoenolpyruvate + H2O. It participates in carbohydrate degradation; glycolysis; pyruvate from D-glyceraldehyde 3-phosphate: step 4/5. Its function is as follows. Catalyzes the reversible conversion of 2-phosphoglycerate (2-PG) into phosphoenolpyruvate (PEP). It is essential for the degradation of carbohydrates via glycolysis. The protein is Enolase of Helicobacter hepaticus (strain ATCC 51449 / 3B1).